A 3926-amino-acid chain; its full sequence is Hybrid PKS-NRPS synthetase LUC5 (3926 aa).

One can recognise a Ketosynthase family 3 (KS3) domain in the interval 8–439 (REPIAIVGTA…GTNAHAIIES (432 aa)). Active-site for beta-ketoacyl synthase activity residues include C181, H318, and H359. Positions 545–863 (VFTGQGAQWP…QGALTRNVHD (319 aa)) are malonyl-CoA:ACP transacylase (MAT) domain. Residues 932–1065 (HPLLGTRSTE…GHLRVDFGSE (134 aa)) are N-terminal hotdog fold. The interval 932–1225 (HPLLGTRSTE…GLTCTSLLRP (294 aa)) is dehydratase (DH) domain. A PKS/mFAS DH domain is found at 932-1228 (HPLLGTRSTE…CTSLLRPGPS (297 aa)). Catalysis depends on H964, which acts as the Proton acceptor; for dehydratase activity. Positions 1081–1228 (LTSVNIERFY…CTSLLRPGPS (148 aa)) are C-terminal hotdog fold. The active-site Proton donor; for dehydratase activity is the D1138. The C-methyltransferase (CMeT) domain stretch occupies residues 1344–1572 (IRAVGENLTE…VNDFYDPSKY (229 aa)). Residues 2091 to 2265 (TYLLAGCTGG…AASVIHIGMI (175 aa)) are ketoreductase (KR) domain 1. In terms of domain architecture, Carrier 1 spans 2371-2448 (EMLEVVEEEF…EICSTAVASL (78 aa)). S2408 carries the O-(pantetheine 4'-phosphoryl)serine modification. Polar residues predominate over residues 2474-2506 (VSGNGSSSSRAPTEFNSSTLKSGAQSTQGTSVS). The interval 2474-2518 (VSGNGSSSSRAPTEFNSSTLKSGAQSTQGTSVSGDKDTNSVDGSA) is disordered. Basic and acidic residues predominate over residues 2507-2518 (GDKDTNSVDGSA). Residues 2525-2810 (PLSFAQERIW…VNLLPLRFQL (286 aa)) form a condensation region. Residues 2979–3389 (DWVKRQPDAI…RIAGDSQIKL (411 aa)) are adenylation. Positions 3501-3580 (ETLTTTQERL…GMAAKIDGST (80 aa)) constitute a Carrier 2 domain. O-(pantetheine 4'-phosphoryl)serine is present on S3540. The tract at residues 3619–3840 (LTGATGFLGL…DFVPVEQVAD (222 aa)) is thiolester reductase (TE) domain.

In the C-terminal section; belongs to the NRP synthetase family.

The protein operates within mycotoxin biosynthesis. Hybrid PKS-NRPS synthetase; part of the gene cluster that mediates the biosynthesis of the mycotoxin lucilactaene and the lucilactaene-related compound NG-391 that act as cell cycle inhibitors with potent growth inhibitory activity against malarial parasites, moderate growth inhibitory activity against cancer cells, and no activity against bacteria and fungi. The hybrid PKS-NRPS synthetase LUC5 is responsible for the condensation of one acetyl-coenzyme A (CoA) unit with six malonyl-CoA units and the amide linkage of the arising heptaketide and homoserine, subsequently releasing the first intermediate prelucilactaene B, as an alcohol with an open ring structure. Lucilactaene and NG-391 lack the 7-methyl group present in fusarins which is inserted in fusarins by the C-methyltransferase (CMeT) domain of the fusarin synthetase FUS1, suggesting that the CMet domain of LUC5 does not methylate this position. Within the pathway, both the cytochrome P450 monooxygenase LUC2 and the hydrolase LUC6 function in parallel in modification of prelucilactaene B. LUC6 may catalyze the 2-pyrrolidone ring formation to form prelucilactaene C from prelucilactaene B, followed by C-15 hydroxylation by the same enzyme to give prelucilactaene D, which is then converted to prelucilactaene E by epoxidation, and finally to prelucilactaene F by cyclization. Prelucilactane D, prelucilactaene E, and prelucilactaene F can be converted to dihydrolucilactaene, NG391, and lucilactaene, respectively, via C-20 methyl group hydroxylation by the cytochrome P450 monooxygenase LUC2. However, LUC2, unlike FUS8 in fusarin C biosynthesis, is not enough for the full oxidation of the C-20 methyl group into carboxylic acid, which is a prerequisite for the final methylation step. The aldehyde dehydrogenase LUC3 is involved in the biosynthesis by further oxidation of the C-20 alcoholic analog prelucilactaene G into a carboxylic derivative. This unidentified carboxylic derivative may be converted to demethyllucilactaene. As the last step, the methyltransferase LUC1 methylates the hydroxyl group at C-21 of demethyllucilactaene to generate lucilactaene. The sequence is that of Hybrid PKS-NRPS synthetase LUC5 from Fusarium sp.